The primary structure comprises 1059 residues: Mitogen-activated protein kinase kinase kinase mlk-1 (1059 aa).

The interval 1 to 66 (MEQASVPSYV…ESSQVSRESP (66 aa)) is disordered. A compositionally biased stretch (low complexity) spans 38–48 (DTTTASTSTDS). Residues 69 to 130 (RASKAFVASY…PSNYAREVTY (62 aa)) form the SH3 domain. A Protein kinase domain is found at 150–454 (TLSDCQIGHG…TLAISFKQYA (305 aa)). ATP-binding positions include 156 to 164 (IGHGATATV) and K193. A coiled-coil region spans residues 199 to 224 (ASNFRADVVSTDEQLEQLKREANLVN). The active-site Proton acceptor is the D297. S355 is subject to Phosphoserine; by max-2 and tpa-1. 2 disordered regions span residues 617–699 (PVVS…QTTR) and 714–808 (RAQS…SSSD). Residues 623–633 (MDDSNTFSTID) show a composition bias toward polar residues. Basic and acidic residues-rich tracts occupy residues 639 to 648 (DPNHSKESKK) and 662 to 674 (NKRD…DERA). Positions 678-689 (SISSRSSSTTSS) are enriched in low complexity. The span at 690 to 699 (NRLITGQTTR) shows a compositional bias: polar residues. The segment covering 749–759 (RYVKDLEKDTP) has biased composition (basic and acidic residues). Polar residues-rich tracts occupy residues 774-790 (LDQT…SINN) and 798-808 (SRRTTANSSSD). The NPQY motif signature appears at 937–940 (NPQY). Y940 carries the post-translational modification Phosphotyrosine.

This sequence belongs to the protein kinase superfamily. STE Ser/Thr protein kinase family. MAP kinase kinase kinase subfamily. In terms of assembly, interacts with max-2; the interaction is independent of max-2 and mlk-1 kinase activities. May interact (via NPQY motif when phosphorylated on tyrosine residue) with shc-1 (via PID domain); the interaction may facilitate mek-1 phosphorylation by bringing mlk-1 and mek-1 together. Interacts with svh-2 (via cytoplasmic domain). Interacts with tpa-1. It depends on Mg(2+) as a cofactor. Post-translationally, may be phosphorylated on tyrosine residues by svh-2. May be ubiquitinated and targeted for proteasomal degradation by E3 ubiquitin ligase rpm-1. Expressed in pharynx, intestine, hypodermis, neurons and body muscles.

The enzyme catalyses L-seryl-[protein] + ATP = O-phospho-L-seryl-[protein] + ADP + H(+). The catalysed reaction is L-threonyl-[protein] + ATP = O-phospho-L-threonyl-[protein] + ADP + H(+). Its activity is regulated as follows. Activated by phosphorylation at Ser-355. May be activated by svh-2-mediated phosphorylation. Its function is as follows. Serine/threonine-protein kinase which, by phosphorylating and activating mek-1, plays an important role in the activation of the JNK pathway composed of mlk-1, mek-1 and kgb-1. Involved in the response to environmental stress such as heavy metals. By activating the JNK pathway downstream of tyrosine receptor svh-2, plays a role in axon regeneration after injury. This chain is Mitogen-activated protein kinase kinase kinase mlk-1, found in Caenorhabditis elegans.